We begin with the raw amino-acid sequence, 368 residues long: DNA integrity scanning protein DisA (368 aa).

The 139-residue stretch at 15–153 (DERLRATLAA…DGRRHVLDEP (139 aa)) folds into the DAC domain. ATP contacts are provided by residues Gly-82, Leu-100, and 113–117 (TRHRS). The segment at 101-121 (QPDPSIPTNESGTRHRSAERT) is disordered. Over residues 112–121 (GTRHRSAERT) the composition is skewed to basic and acidic residues.

This sequence belongs to the DisA family. As to quaternary structure, homooctamer. The cofactor is Mg(2+).

The enzyme catalyses 2 ATP = 3',3'-c-di-AMP + 2 diphosphate. Functionally, participates in a DNA-damage check-point. DisA forms globular foci that rapidly scan along the chromosomes searching for lesions. In terms of biological role, also has diadenylate cyclase activity, catalyzing the condensation of 2 ATP molecules into cyclic di-AMP (c-di-AMP). c-di-AMP likely acts as a signaling molecule that may couple DNA integrity with a cellular process. The polypeptide is DNA integrity scanning protein DisA (Acidothermus cellulolyticus (strain ATCC 43068 / DSM 8971 / 11B)).